The following is a 378-amino-acid chain: Cln5-like protein 1 (378 aa).

The signal sequence occupies residues 1-20; sequence MNKIIIFILFLISILQSVRG. Residues asparagine 63, asparagine 93, asparagine 135, asparagine 181, asparagine 220, asparagine 226, asparagine 254, and asparagine 280 are each glycosylated (N-linked (GlcNAc...) asparagine). Residues 308–328 form a helical membrane-spanning segment; the sequence is WIFIIILLSFTTVYLVGGILI.

It belongs to the CLN5 family.

The protein resides in the membrane. The sequence is that of Cln5-like protein 1 (cln5la) from Dictyostelium discoideum (Social amoeba).